The chain runs to 123 residues: Large ribosomal subunit protein bL12 (123 aa).

Belongs to the bacterial ribosomal protein bL12 family. Homodimer. Part of the ribosomal stalk of the 50S ribosomal subunit. Forms a multimeric L10(L12)X complex, where L10 forms an elongated spine to which 2 to 4 L12 dimers bind in a sequential fashion. Binds GTP-bound translation factors.

In terms of biological role, forms part of the ribosomal stalk which helps the ribosome interact with GTP-bound translation factors. Is thus essential for accurate translation. In Shewanella amazonensis (strain ATCC BAA-1098 / SB2B), this protein is Large ribosomal subunit protein bL12.